The sequence spans 293 residues: Small ribosomal subunit protein uS5 (293 aa).

A disordered region spans residues 1–56; the sequence is MADDAGAAGGPGGPGGPGMGNRGGFRGGFGSGIRGRGRGRGRGRGRGRGARGGKAE. Position 2 is an N-acetylalanine (Ala-2). Over residues 7–34 the composition is skewed to gly residues; sequence AAGGPGGPGGPGMGNRGGFRGGFGSGIR. Basic residues predominate over residues 35 to 51; it reads GRGRGRGRGRGRGRGAR. Glycyl lysine isopeptide (Lys-Gly) (interchain with G-Cter in ubiquitin) cross-links involve residues Lys-54 and Lys-58. One can recognise an S5 DRBM domain in the interval 102 to 165; sequence LKDEVLKIMP…ILAKLSIVPV (64 aa). At Thr-252 the chain carries Phosphothreonine. At Lys-263 the chain carries N6-acetyllysine. Position 264 is a phosphoserine (Ser-264). Thr-270 carries the phosphothreonine modification. The residue at position 275 (Lys-275) is an N6-acetyllysine; alternate. Lys-275 is covalently cross-linked (Glycyl lysine isopeptide (Lys-Gly) (interchain with G-Cter in SUMO1); alternate). Lys-275 is covalently cross-linked (Glycyl lysine isopeptide (Lys-Gly) (interchain with G-Cter in SUMO2); alternate). Lys-275 participates in a covalent cross-link: Glycyl lysine isopeptide (Lys-Gly) (interchain with G-Cter in ubiquitin); alternate. Ser-281 is subject to Phosphoserine.

Belongs to the universal ribosomal protein uS5 family. Component of the small ribosomal subunit. Interacts with zinc finger protein ZNF277 (via zinc-finger domains); the interaction is direct; the interaction is extra-ribosomal. Interaction with ZNF277 competes with the binding of RPS2 to protein arginine methyltransferase PRMT3. In terms of processing, citrullinated by PADI4 in the Arg/Gly-rich region. Post-translationally, asymmetric arginine dimethylation by PRMT3 occurs at multiple sites in the Arg/Gly-rich region. Monoubiquitinated at Lys-54 and Lys-58 by RNF10 when a ribosome has stalled during translation, leading to its degradation by the proteasome. Deubiquitinated at Lys-54 and Lys-58 by USP10, preventing degradation by the proteasome and promoting 40S ribosome subunit recycling following ribosome dissociation.

It localises to the cytoplasm. The protein resides in the nucleus. The protein localises to the nucleolus. Its function is as follows. Component of the ribosome, a large ribonucleoprotein complex responsible for the synthesis of proteins in the cell. The small ribosomal subunit (SSU) binds messenger RNAs (mRNAs) and translates the encoded message by selecting cognate aminoacyl-transfer RNA (tRNA) molecules. The large subunit (LSU) contains the ribosomal catalytic site termed the peptidyl transferase center (PTC), which catalyzes the formation of peptide bonds, thereby polymerizing the amino acids delivered by tRNAs into a polypeptide chain. The nascent polypeptides leave the ribosome through a tunnel in the LSU and interact with protein factors that function in enzymatic processing, targeting, and the membrane insertion of nascent chains at the exit of the ribosomal tunnel. Plays a role in the assembly and function of the 40S ribosomal subunit. Mutations in this protein affects the control of translational fidelity. Involved in nucleolar processing of pre-18S ribosomal RNA and ribosome assembly. The chain is Small ribosomal subunit protein uS5 (RPS2) from Homo sapiens (Human).